The following is a 623-amino-acid chain: Glutathione import ATP-binding protein GsiA (623 aa).

ABC transporter domains follow at residues 15 to 269 and 314 to 564; these read VENL…RALL and LRVR…RKLL. ATP is bound by residues 49 to 56 and 357 to 364; these read GESGSGKS.

The protein belongs to the ABC transporter superfamily. Glutathione importer (TC 3.A.1.5.11) family. In terms of assembly, the complex is composed of two ATP-binding proteins (GsiA), two transmembrane proteins (GsiC and GsiD) and a solute-binding protein (GsiB).

Its subcellular location is the cell inner membrane. It catalyses the reaction glutathione(out) + ATP + H2O = glutathione(in) + ADP + phosphate + H(+). In terms of biological role, part of the ABC transporter complex GsiABCD involved in glutathione import. Responsible for energy coupling to the transport system. In Shigella boydii serotype 4 (strain Sb227), this protein is Glutathione import ATP-binding protein GsiA.